Consider the following 284-residue polypeptide: uncharacterized protein (284 aa).

The segment at 37-65 adopts a C3H1-type zinc-finger fold; the sequence is NEKKLICFSIINGENCIYGPNCTYAHSLS.

This is an uncharacterized protein from Acanthamoeba polyphaga (Amoeba).